The following is a 201-amino-acid chain: Superoxide dismutase [Mn] (201 aa).

Mn(2+) is bound by residues His-27, His-81, Asp-163, and His-167.

Belongs to the iron/manganese superoxide dismutase family. Homodimer. Requires Mn(2+) as cofactor.

It localises to the secreted. The catalysed reaction is 2 superoxide + 2 H(+) = H2O2 + O2. In terms of biological role, destroys superoxide anion radicals which are normally produced within the cells and which are toxic to biological systems. In Streptococcus pyogenes, this protein is Superoxide dismutase [Mn] (sodA).